A 234-amino-acid chain; its full sequence is Purine nucleoside phosphorylase DeoD-type (234 aa).

His4 contributes to the a purine D-ribonucleoside binding site. Phosphate is bound by residues Gly20, Arg24, Arg43, and 87-90; that span reads RIGS. A purine D-ribonucleoside contacts are provided by residues Glu162, 179-181, and 203-204; these read EME and SD. Catalysis depends on Asp204, which acts as the Proton donor.

It belongs to the PNP/UDP phosphorylase family. In terms of assembly, homohexamer; trimer of homodimers.

The enzyme catalyses a purine D-ribonucleoside + phosphate = a purine nucleobase + alpha-D-ribose 1-phosphate. The catalysed reaction is a purine 2'-deoxy-D-ribonucleoside + phosphate = a purine nucleobase + 2-deoxy-alpha-D-ribose 1-phosphate. Catalyzes the reversible phosphorolytic breakdown of the N-glycosidic bond in the beta-(deoxy)ribonucleoside molecules, with the formation of the corresponding free purine bases and pentose-1-phosphate. This Roseobacter denitrificans (strain ATCC 33942 / OCh 114) (Erythrobacter sp. (strain OCh 114)) protein is Purine nucleoside phosphorylase DeoD-type.